We begin with the raw amino-acid sequence, 154 residues long: Protein-export protein SecB (154 aa).

The protein belongs to the SecB family. Homotetramer, a dimer of dimers. One homotetramer interacts with 1 SecA dimer.

Its subcellular location is the cytoplasm. One of the proteins required for the normal export of preproteins out of the cell cytoplasm. It is a molecular chaperone that binds to a subset of precursor proteins, maintaining them in a translocation-competent state. It also specifically binds to its receptor SecA. This is Protein-export protein SecB from Vibrio parahaemolyticus serotype O3:K6 (strain RIMD 2210633).